A 282-amino-acid chain; its full sequence is Pantothenate synthetase (282 aa).

Residue 30–37 participates in ATP binding; it reads MGNLHDGH. His-37 (proton donor) is an active-site residue. Gln-61 contributes to the (R)-pantoate binding site. Gln-61 is a binding site for beta-alanine. 149-152 is a binding site for ATP; that stretch reads GEKD. Gln-155 provides a ligand contact to (R)-pantoate. Residue 186–189 participates in ATP binding; the sequence is MSSR.

Belongs to the pantothenate synthetase family. In terms of assembly, homodimer.

Its subcellular location is the cytoplasm. The enzyme catalyses (R)-pantoate + beta-alanine + ATP = (R)-pantothenate + AMP + diphosphate + H(+). The protein operates within cofactor biosynthesis; (R)-pantothenate biosynthesis; (R)-pantothenate from (R)-pantoate and beta-alanine: step 1/1. Catalyzes the condensation of pantoate with beta-alanine in an ATP-dependent reaction via a pantoyl-adenylate intermediate. This is Pantothenate synthetase from Alteromonas mediterranea (strain DSM 17117 / CIP 110805 / LMG 28347 / Deep ecotype).